Consider the following 320-residue polypeptide: Cytochrome f (320 aa).

The first 35 residues, 1–35 (MENRKTFSWLKEQMIRSISVSIMIYVITRTSISNA), serve as a signal peptide directing secretion. Heme is bound by residues tyrosine 36, cysteine 56, cysteine 59, and histidine 60. A helical transmembrane segment spans residues 286-305 (VQGLLFFFASVILAQVFLVL).

It belongs to the cytochrome f family. The 4 large subunits of the cytochrome b6-f complex are cytochrome b6, subunit IV (17 kDa polypeptide, petD), cytochrome f and the Rieske protein, while the 4 small subunits are PetG, PetL, PetM and PetN. The complex functions as a dimer. Requires heme as cofactor.

The protein localises to the plastid. The protein resides in the chloroplast thylakoid membrane. Its function is as follows. Component of the cytochrome b6-f complex, which mediates electron transfer between photosystem II (PSII) and photosystem I (PSI), cyclic electron flow around PSI, and state transitions. The chain is Cytochrome f (petA) from Zea mays (Maize).